Consider the following 471-residue polypeptide: Glutamate--tRNA ligase (471 aa).

The 'HIGH' region signature appears at 9–19; that stretch reads PSPTGYLHVGG. Zn(2+)-binding residues include Cys-98, Cys-100, Cys-125, and His-127. The 'KMSKS' region motif lies at 237-241; that stretch reads KLSKR. Residue Lys-240 participates in ATP binding.

This sequence belongs to the class-I aminoacyl-tRNA synthetase family. Glutamate--tRNA ligase type 1 subfamily. Monomer. Zn(2+) is required as a cofactor.

The protein resides in the cytoplasm. The catalysed reaction is tRNA(Glu) + L-glutamate + ATP = L-glutamyl-tRNA(Glu) + AMP + diphosphate. Its function is as follows. Catalyzes the attachment of glutamate to tRNA(Glu) in a two-step reaction: glutamate is first activated by ATP to form Glu-AMP and then transferred to the acceptor end of tRNA(Glu). This is Glutamate--tRNA ligase from Escherichia coli O157:H7.